The following is a 575-amino-acid chain: Glycosyltransferase family 92 protein At1g27200 (575 aa).

The chain crosses the membrane as a helical span at residues 22-44 (FLSQRYLILCFCCFFVLLFFLSS). One can recognise a GT92 domain in the interval 293-540 (LCVCTMLWNQ…TEAIEPPDWK (248 aa)).

Belongs to the glycosyltransferase 92 family.

The protein resides in the membrane. This chain is Glycosyltransferase family 92 protein At1g27200, found in Arabidopsis thaliana (Mouse-ear cress).